Reading from the N-terminus, the 550-residue chain is Cytochrome P450 monooxygenase hasH (550 aa).

Residues 39 to 59 (IGVLASIVVLVTVVIGPKAVI) traverse the membrane as a helical segment. Cys-493 serves as a coordination point for heme.

It belongs to the cytochrome P450 family. The cofactor is heme.

The protein resides in the membrane. The protein operates within secondary metabolite biosynthesis. Functionally, cytochrome P450 monooxygenase; part of the gene cluster that mediates the biosynthesis of hexadehydro-astechrome (HAS), a tryptophan-derived iron(III)-complex that acts as a virulence factor in infected mice. Within the pathway, hasH, with the O-methyltransferase hasC and the FAD-linked oxidoreductase hasG, convert the hasE-prenylated Trp-Ala dipeptide into an O-methylated diketopiperazine that is then released from the hasD NRPS. The HAS biosynthesis begins with the synthesis of a tethered Trp-Ala dipeptide by the NRPS hasD. The 7-dimethylallyltryptophan synthase hasE then catalyzes the prenylation of the hasD-tethered tryptophan or the resulting tethered Trp-Ala dipeptide at the C-7 position of the indole moiety. HAS biosynthesis continues via tethered intermediates with the succesive action of the cytochrome P450 monooxygenase hasH, the O-methyltransferase hasC, and the FAD-linked oxidoreductase hasG. The resulting O-methylated diketopiperazine is then released from hasD. Finally, three O-methylated diketopiperazine molecules assemble in a trimeric complex with Fe(III) to produce hexadehydro-astechrome. The polypeptide is Cytochrome P450 monooxygenase hasH (Aspergillus fumigatus (strain CBS 144.89 / FGSC A1163 / CEA10) (Neosartorya fumigata)).